Here is an 89-residue protein sequence, read N- to C-terminus: UPF0237 protein CE1668 (89 aa).

Residues 4 to 78 (IMTVTGQDHT…KEQGLVIRIQ (75 aa)) form the ACT domain.

The protein belongs to the UPF0237 family.

This is UPF0237 protein CE1668 from Corynebacterium efficiens (strain DSM 44549 / YS-314 / AJ 12310 / JCM 11189 / NBRC 100395).